The sequence spans 199 residues: Acireductone dioxygenase 1 (199 aa).

Positions 99, 101, 105, and 144 each coordinate Fe(2+). 4 residues coordinate Ni(2+): H99, H101, E105, and H144.

The protein belongs to the acireductone dioxygenase (ARD) family. Fe(2+) is required as a cofactor. It depends on Ni(2+) as a cofactor.

It localises to the cytoplasm. The protein localises to the nucleus. It carries out the reaction 1,2-dihydroxy-5-(methylsulfanyl)pent-1-en-3-one + O2 = 4-methylsulfanyl-2-oxobutanoate + formate + 2 H(+). The enzyme catalyses 1,2-dihydroxy-5-(methylsulfanyl)pent-1-en-3-one + O2 = 3-(methylsulfanyl)propanoate + CO + formate + 2 H(+). It functions in the pathway amino-acid biosynthesis; L-methionine biosynthesis via salvage pathway; L-methionine from S-methyl-5-thio-alpha-D-ribose 1-phosphate: step 5/6. In terms of biological role, catalyzes 2 different reactions between oxygen and the acireductone 1,2-dihydroxy-3-keto-5-methylthiopentene (DHK-MTPene) depending upon the metal bound in the active site. Fe-containing acireductone dioxygenase (Fe-ARD) produces formate and 2-keto-4-methylthiobutyrate (KMTB), the alpha-ketoacid precursor of methionine in the methionine recycle pathway. Ni-containing acireductone dioxygenase (Ni-ARD) produces methylthiopropionate, carbon monoxide and formate, and does not lie on the methionine recycle pathway. The polypeptide is Acireductone dioxygenase 1 (ARD1) (Oryza sativa subsp. indica (Rice)).